We begin with the raw amino-acid sequence, 356 residues long: MGIEVKNLVKRFGNFTAIDDLSLDVPSGELVALLGPSGSGKTTLLRIIAGLEDADKGQVIFEGREVGKKNAKDRGVGFVFQHYALFRHMTIFENIAFGLEVRKRSERPSKDTIRDKVMSLLKLVQLENFYNRYPSELSGGQRQRIALARALAIEPRFLLLDEPFGALDAKVRKELRNWLRRLHDEIHITSVFVTHDQEEALEVSDKVVILRSGKIEQVGTPDEVYNHPKNSFVFHFLGDVNLFHGRVQGGQTQLGEIKVDTPEHSEIENASAVGYVRPYDVEILREPIEAQTIPAEIQYIHSTGRNVKIDLKRLDTGTILESQLNSSEFQSLNLLPGETVHIRFKKIKVYVEDYTI.

Residues 3–237 (IEVKNLVKRF…PKNSFVFHFL (235 aa)) form the ABC transporter domain. 35–42 (GPSGSGKT) is a binding site for ATP.

It belongs to the ABC transporter superfamily. Sulfate/tungstate importer (TC 3.A.1.6) family. As to quaternary structure, the complex is composed of two ATP-binding proteins (CysA), two transmembrane proteins (CysT and CysW) and a solute-binding protein (CysP).

The protein resides in the cell inner membrane. The enzyme catalyses sulfate(out) + ATP + H2O = sulfate(in) + ADP + phosphate + H(+). It carries out the reaction thiosulfate(out) + ATP + H2O = thiosulfate(in) + ADP + phosphate + H(+). Functionally, part of the ABC transporter complex CysAWTP involved in sulfate/thiosulfate import. Responsible for energy coupling to the transport system. In Leptospira interrogans serogroup Icterohaemorrhagiae serovar copenhageni (strain Fiocruz L1-130), this protein is Sulfate/thiosulfate import ATP-binding protein CysA.